The chain runs to 284 residues: Phosphatidylserine decarboxylase proenzyme (284 aa).

Catalysis depends on charge relay system; for autoendoproteolytic cleavage activity residues D88, H145, and S248. The active-site Schiff-base intermediate with substrate; via pyruvic acid; for decarboxylase activity is the S248. Position 248 is a pyruvic acid (Ser); by autocatalysis (S248).

Belongs to the phosphatidylserine decarboxylase family. PSD-B subfamily. Prokaryotic type I sub-subfamily. As to quaternary structure, heterodimer of a large membrane-associated beta subunit and a small pyruvoyl-containing alpha subunit. It depends on pyruvate as a cofactor. In terms of processing, is synthesized initially as an inactive proenzyme. Formation of the active enzyme involves a self-maturation process in which the active site pyruvoyl group is generated from an internal serine residue via an autocatalytic post-translational modification. Two non-identical subunits are generated from the proenzyme in this reaction, and the pyruvate is formed at the N-terminus of the alpha chain, which is derived from the carboxyl end of the proenzyme. The autoendoproteolytic cleavage occurs by a canonical serine protease mechanism, in which the side chain hydroxyl group of the serine supplies its oxygen atom to form the C-terminus of the beta chain, while the remainder of the serine residue undergoes an oxidative deamination to produce ammonia and the pyruvoyl prosthetic group on the alpha chain. During this reaction, the Ser that is part of the protease active site of the proenzyme becomes the pyruvoyl prosthetic group, which constitutes an essential element of the active site of the mature decarboxylase.

It localises to the cell membrane. The catalysed reaction is a 1,2-diacyl-sn-glycero-3-phospho-L-serine + H(+) = a 1,2-diacyl-sn-glycero-3-phosphoethanolamine + CO2. The protein operates within phospholipid metabolism; phosphatidylethanolamine biosynthesis; phosphatidylethanolamine from CDP-diacylglycerol: step 2/2. In terms of biological role, catalyzes the formation of phosphatidylethanolamine (PtdEtn) from phosphatidylserine (PtdSer). In Delftia acidovorans (strain DSM 14801 / SPH-1), this protein is Phosphatidylserine decarboxylase proenzyme.